Here is a 279-residue protein sequence, read N- to C-terminus: Probable endonuclease 4 (279 aa).

His-68, His-108, Glu-143, Asp-177, His-180, His-214, Asp-227, His-229, and Glu-259 together coordinate Zn(2+).

It belongs to the AP endonuclease 2 family. Zn(2+) is required as a cofactor.

The enzyme catalyses Endonucleolytic cleavage to 5'-phosphooligonucleotide end-products.. Endonuclease IV plays a role in DNA repair. It cleaves phosphodiester bonds at apurinic or apyrimidinic (AP) sites, generating a 3'-hydroxyl group and a 5'-terminal sugar phosphate. The sequence is that of Probable endonuclease 4 from Nitrosopumilus maritimus (strain SCM1).